The chain runs to 281 residues: 3-deoxy-manno-octulosonate cytidylyltransferase (281 aa).

Belongs to the KdsB family.

It is found in the cytoplasm. The catalysed reaction is 3-deoxy-alpha-D-manno-oct-2-ulosonate + CTP = CMP-3-deoxy-beta-D-manno-octulosonate + diphosphate. Its pathway is nucleotide-sugar biosynthesis; CMP-3-deoxy-D-manno-octulosonate biosynthesis; CMP-3-deoxy-D-manno-octulosonate from 3-deoxy-D-manno-octulosonate and CTP: step 1/1. It participates in bacterial outer membrane biogenesis; lipopolysaccharide biosynthesis. Its function is as follows. Activates KDO (a required 8-carbon sugar) for incorporation into bacterial lipopolysaccharide in Gram-negative bacteria. The chain is 3-deoxy-manno-octulosonate cytidylyltransferase from Xanthomonas campestris pv. campestris (strain B100).